We begin with the raw amino-acid sequence, 231 residues long: Cytochrome c oxidase subunit 2 (231 aa).

Residues 1–14 (MAHPAQLGLQNATS) are Mitochondrial intermembrane-facing. Residues 15–45 (PIMEELIAFHDHALMIIFLISSLVLYVISLM) form a helical membrane-spanning segment. Residues 46–59 (LTTKLTHTSTMNAQ) lie on the Mitochondrial matrix side of the membrane. A helical transmembrane segment spans residues 60 to 87 (EIEMIWTILPAIILIMIALPSLRILYMT). Residues 88-231 (DEFNKPYLTL…WASYLYIVSL (144 aa)) lie on the Mitochondrial intermembrane side of the membrane. Cu cation-binding residues include His-161, Cys-196, Glu-198, Cys-200, His-204, and Met-207. Glu-198 contacts Mg(2+).

It belongs to the cytochrome c oxidase subunit 2 family. In terms of assembly, component of the cytochrome c oxidase (complex IV, CIV), a multisubunit enzyme composed of 14 subunits. The complex is composed of a catalytic core of 3 subunits MT-CO1, MT-CO2 and MT-CO3, encoded in the mitochondrial DNA, and 11 supernumerary subunits COX4I, COX5A, COX5B, COX6A, COX6B, COX6C, COX7A, COX7B, COX7C, COX8 and NDUFA4, which are encoded in the nuclear genome. The complex exists as a monomer or a dimer and forms supercomplexes (SCs) in the inner mitochondrial membrane with NADH-ubiquinone oxidoreductase (complex I, CI) and ubiquinol-cytochrome c oxidoreductase (cytochrome b-c1 complex, complex III, CIII), resulting in different assemblies (supercomplex SCI(1)III(2)IV(1) and megacomplex MCI(2)III(2)IV(2)). Found in a complex with TMEM177, COA6, COX18, COX20, SCO1 and SCO2. Interacts with TMEM177 in a COX20-dependent manner. Interacts with COX20. Interacts with COX16. Requires Cu cation as cofactor.

The protein localises to the mitochondrion inner membrane. The enzyme catalyses 4 Fe(II)-[cytochrome c] + O2 + 8 H(+)(in) = 4 Fe(III)-[cytochrome c] + 2 H2O + 4 H(+)(out). Its function is as follows. Component of the cytochrome c oxidase, the last enzyme in the mitochondrial electron transport chain which drives oxidative phosphorylation. The respiratory chain contains 3 multisubunit complexes succinate dehydrogenase (complex II, CII), ubiquinol-cytochrome c oxidoreductase (cytochrome b-c1 complex, complex III, CIII) and cytochrome c oxidase (complex IV, CIV), that cooperate to transfer electrons derived from NADH and succinate to molecular oxygen, creating an electrochemical gradient over the inner membrane that drives transmembrane transport and the ATP synthase. Cytochrome c oxidase is the component of the respiratory chain that catalyzes the reduction of oxygen to water. Electrons originating from reduced cytochrome c in the intermembrane space (IMS) are transferred via the dinuclear copper A center (CU(A)) of subunit 2 and heme A of subunit 1 to the active site in subunit 1, a binuclear center (BNC) formed by heme A3 and copper B (CU(B)). The BNC reduces molecular oxygen to 2 water molecules using 4 electrons from cytochrome c in the IMS and 4 protons from the mitochondrial matrix. The sequence is that of Cytochrome c oxidase subunit 2 (MT-CO2) from Alouatta palliata (Mantled howler monkey).